The chain runs to 131 residues: C-C motif chemokine 21 (131 aa).

The N-terminal stretch at 1-23 (MAQSLALSLLILVLAFGIPGTQG) is a signal peptide. Cystine bridges form between Cys-31-Cys-57, Cys-32-Cys-75, and Cys-103-Cys-119. A disordered region spans residues 89-131 (HLDKTPTPRKPVQGCRKDRGVPKNGKKGKGCKRTEQSQTPKGP).

The protein belongs to the intercrine beta (chemokine CC) family. In terms of assembly, monomer. Binds to CCR7. Interacts with PDPN; relocalizes PDPN to the basolateral membrane. Interacts with TNFAIP6 (via Link domain). Interacts with GPR174.

It localises to the secreted. Inhibits hemopoiesis and stimulates chemotaxis. Chemotactic in vitro for thymocytes and activated T-cells, but not for B-cells, macrophages, or neutrophils. Shows preferential activity towards naive T-cells. May play a role in mediating homing of lymphocytes to secondary lymphoid organs. Binds to atypical chemokine receptor ACKR4 and mediates the recruitment of beta-arrestin (ARRB1/2) to ACKR4. This Macaca mulatta (Rhesus macaque) protein is C-C motif chemokine 21 (CCL21).